We begin with the raw amino-acid sequence, 225 residues long: ATP-dependent dethiobiotin synthetase BioD (225 aa).

Position 15-20 (15-20 (EIGKTF)) interacts with ATP. Thr-19 contributes to the Mg(2+) binding site. Residue Lys-40 is part of the active site. ATP-binding positions include Asp-57, 118 to 121 (EGVG), 178 to 179 (NR), and 207 to 209 (PHV). 2 residues coordinate Mg(2+): Asp-57 and Glu-118.

Belongs to the dethiobiotin synthetase family. Homodimer. It depends on Mg(2+) as a cofactor.

The protein localises to the cytoplasm. The catalysed reaction is (7R,8S)-7,8-diammoniononanoate + CO2 + ATP = (4R,5S)-dethiobiotin + ADP + phosphate + 3 H(+). The protein operates within cofactor biosynthesis; biotin biosynthesis; biotin from 7,8-diaminononanoate: step 1/2. In terms of biological role, catalyzes a mechanistically unusual reaction, the ATP-dependent insertion of CO2 between the N7 and N8 nitrogen atoms of 7,8-diaminopelargonic acid (DAPA, also called 7,8-diammoniononanoate) to form a ureido ring. The protein is ATP-dependent dethiobiotin synthetase BioD of Aromatoleum aromaticum (strain DSM 19018 / LMG 30748 / EbN1) (Azoarcus sp. (strain EbN1)).